A 141-amino-acid polypeptide reads, in one-letter code: Hemoglobin subunit alpha-1 (141 aa).

A Globin domain is found at 1-141; it reads VLSPEDKNNV…VSTVLTSKYR (141 aa). Residue His-58 coordinates O2. Residue His-87 coordinates heme b.

The protein belongs to the globin family. Heterotetramer of two alpha chains and two beta chains. As to expression, red blood cells.

Involved in oxygen transport from the lung to the various peripheral tissues. The protein is Hemoglobin subunit alpha-1 of Tadarida brasiliensis (Brazilian free-tailed bat).